Here is a 106-residue protein sequence, read N- to C-terminus: Cell cycle protein GpsB (106 aa).

Residues 34–67 (LDVIIQDYDNFKQEIDRLKAENEKLKKSTPAVEQ) adopt a coiled-coil conformation. A disordered region spans residues 55-83 (NEKLKKSTPAVEQSRSRSQQPPTSQVNYD). The segment covering 70–79 (SRSQQPPTSQ) has biased composition (low complexity).

The protein belongs to the GpsB family. Forms polymers through the coiled coil domains. Interacts with PBP1, MreC and EzrA.

It is found in the cytoplasm. Divisome component that associates with the complex late in its assembly, after the Z-ring is formed, and is dependent on DivIC and PBP2B for its recruitment to the divisome. Together with EzrA, is a key component of the system that regulates PBP1 localization during cell cycle progression. Its main role could be the removal of PBP1 from the cell pole after pole maturation is completed. Also contributes to the recruitment of PBP1 to the division complex. Not essential for septum formation. The protein is Cell cycle protein GpsB of Oceanobacillus iheyensis (strain DSM 14371 / CIP 107618 / JCM 11309 / KCTC 3954 / HTE831).